A 201-amino-acid chain; its full sequence is UPF0301 protein Arad_1256 (201 aa).

Belongs to the UPF0301 (AlgH) family.

In Rhizobium rhizogenes (strain K84 / ATCC BAA-868) (Agrobacterium radiobacter), this protein is UPF0301 protein Arad_1256.